The chain runs to 353 residues: MNLLKTQLKGDRVLAGKEAVAELYKTGYFGRPKDDGLELSLVEAAYLQSRGKLDIELEGKLLGFRAFFEQASLRQQNFELKYIVYKDLKERGYYVQPSAADFRVYPRGSHPGKSAAKIFVHVLSERQPLSVKLLQESVASAENVHKQFILAVVDEESDLTFYEIKSASPKGEMPEPFPAVKADATFLEDRVIAWDAEASGALYSRGFYGKMLDPERLQLSLVESLYLFSRGVIVVRDRKGKIFSFDEFVEKASEIEGSFLRKYSAYKALRDSGHVVKTGFKFGTHFRVYRKVESIEKIPHSEYLVNVIPEDYEFRLPVMSGAVRLANSVRKRMLFAVEKGEEVEYLDIGRVKM.

Catalysis depends on residues Tyr-289, His-300, and Lys-331.

This sequence belongs to the tRNA-intron endonuclease family. Archaeal long subfamily. As to quaternary structure, homodimer.

The enzyme catalyses pretRNA = a 3'-half-tRNA molecule with a 5'-OH end + a 5'-half-tRNA molecule with a 2',3'-cyclic phosphate end + an intron with a 2',3'-cyclic phosphate and a 5'-hydroxyl terminus.. Endonuclease that removes tRNA introns. Cleaves pre-tRNA at the 5'- and 3'-splice sites to release the intron. The products are an intron and two tRNA half-molecules bearing 2',3' cyclic phosphate and 5'-OH termini. Recognizes a pseudosymmetric substrate in which 2 bulged loops of 3 bases are separated by a stem of 4 bp. In Methanosarcina mazei (strain ATCC BAA-159 / DSM 3647 / Goe1 / Go1 / JCM 11833 / OCM 88) (Methanosarcina frisia), this protein is tRNA-splicing endonuclease.